Here is a 353-residue protein sequence, read N- to C-terminus: tRNA-cytidine(32) 2-sulfurtransferase (353 aa).

Residues 49 to 54 carry the PP-loop motif motif; sequence SGGKDS. [4Fe-4S] cluster is bound by residues cysteine 124, cysteine 127, and cysteine 215.

This sequence belongs to the TtcA family. In terms of assembly, homodimer. Mg(2+) is required as a cofactor. Requires [4Fe-4S] cluster as cofactor.

The protein resides in the cytoplasm. The catalysed reaction is cytidine(32) in tRNA + S-sulfanyl-L-cysteinyl-[cysteine desulfurase] + AH2 + ATP = 2-thiocytidine(32) in tRNA + L-cysteinyl-[cysteine desulfurase] + A + AMP + diphosphate + H(+). The protein operates within tRNA modification. Functionally, catalyzes the ATP-dependent 2-thiolation of cytidine in position 32 of tRNA, to form 2-thiocytidine (s(2)C32). The sulfur atoms are provided by the cysteine/cysteine desulfurase (IscS) system. This is tRNA-cytidine(32) 2-sulfurtransferase from Sodalis glossinidius (strain morsitans).